A 506-amino-acid polypeptide reads, in one-letter code: Probable Xaa-Pro aminopeptidase BDCG_04966 (506 aa).

The Mn(2+) site is built by aspartate 285, aspartate 296, glutamate 433, and glutamate 471.

This sequence belongs to the peptidase M24B family. The cofactor is Mn(2+).

It carries out the reaction Release of any N-terminal amino acid, including proline, that is linked to proline, even from a dipeptide or tripeptide.. In terms of biological role, catalyzes the removal of a penultimate prolyl residue from the N-termini of peptides. The sequence is that of Probable Xaa-Pro aminopeptidase BDCG_04966 from Ajellomyces dermatitidis (strain ER-3 / ATCC MYA-2586) (Blastomyces dermatitidis).